A 200-amino-acid chain; its full sequence is MLPDIGGTELLIIAAVALIVVGPKDLPALLRKVGQFVGRMRGMASEFRASFDEMARQSELDELRREVQAMRSGQFTNPVQDAADAARDVQVDQVFADIDASLSSGAMQAHPYAAGETHNSILPTAEPSAEIVEAKPKRAPRKKAVAEPVAAEPVLVEPVKAPRKRASQKQEITVEAPKAVRAPRKRASKAGDSTASDIVS.

A helical transmembrane segment spans residues L2–G22. Residues K160 to S200 form a disordered region. A compositionally biased stretch (polar residues) spans G191 to S200.

It belongs to the TatB family. In terms of assembly, the Tat system comprises two distinct complexes: a TatABC complex, containing multiple copies of TatA, TatB and TatC subunits, and a separate TatA complex, containing only TatA subunits. Substrates initially bind to the TatABC complex, which probably triggers association of the separate TatA complex to form the active translocon.

Its subcellular location is the cell inner membrane. Its function is as follows. Part of the twin-arginine translocation (Tat) system that transports large folded proteins containing a characteristic twin-arginine motif in their signal peptide across membranes. Together with TatC, TatB is part of a receptor directly interacting with Tat signal peptides. TatB may form an oligomeric binding site that transiently accommodates folded Tat precursor proteins before their translocation. In Caulobacter vibrioides (strain ATCC 19089 / CIP 103742 / CB 15) (Caulobacter crescentus), this protein is Sec-independent protein translocase protein TatB.